The sequence spans 275 residues: MSAVAPHPVPAPALAAARAALTERAPLVQCLTNSVVQTITANALLAAGAAPAMVDNVHESAAFAQIASAVLVNVGTLDDDRARAMGLAAQSADRSRTPWVLDPVAVGGLEFRTRVARDLLASSPTVVRGNASEVLGLAGAGSGGRGVDSTAGAEEAVEAARELSRRTGGAVAVSGVVDVLVHDGRTLRVSGGHVLLTRTTGAGCSLGALVAAYAAVEDDPLVAAAAAHVHVAIAAERAAARAARPGSFATAWIDELDAVDADAVRADLETSGRLA.

Residue Met53 participates in substrate binding. The ATP site is built by Arg128 and Ser174. Gly201 serves as a coordination point for substrate.

Belongs to the Thz kinase family. It depends on Mg(2+) as a cofactor.

The catalysed reaction is 5-(2-hydroxyethyl)-4-methylthiazole + ATP = 4-methyl-5-(2-phosphooxyethyl)-thiazole + ADP + H(+). Its pathway is cofactor biosynthesis; thiamine diphosphate biosynthesis; 4-methyl-5-(2-phosphoethyl)-thiazole from 5-(2-hydroxyethyl)-4-methylthiazole: step 1/1. Catalyzes the phosphorylation of the hydroxyl group of 4-methyl-5-beta-hydroxyethylthiazole (THZ). This Kineococcus radiotolerans (strain ATCC BAA-149 / DSM 14245 / SRS30216) protein is Hydroxyethylthiazole kinase.